A 437-amino-acid chain; its full sequence is Trigger factor (437 aa).

Positions 164–249 (GDFAKFDFEG…LHEIQCKKIG (86 aa)) constitute a PPIase FKBP-type domain.

This sequence belongs to the FKBP-type PPIase family. Tig subfamily.

The protein localises to the cytoplasm. The enzyme catalyses [protein]-peptidylproline (omega=180) = [protein]-peptidylproline (omega=0). In terms of biological role, involved in protein export. Acts as a chaperone by maintaining the newly synthesized protein in an open conformation. Functions as a peptidyl-prolyl cis-trans isomerase. The polypeptide is Trigger factor (Campylobacter hominis (strain ATCC BAA-381 / DSM 21671 / CCUG 45161 / LMG 19568 / NCTC 13146 / CH001A)).